Reading from the N-terminus, the 235-residue chain is Large ribosomal subunit protein uL1 (235 aa).

This sequence belongs to the universal ribosomal protein uL1 family. As to quaternary structure, part of the 50S ribosomal subunit.

Binds directly to 23S rRNA. The L1 stalk is quite mobile in the ribosome, and is involved in E site tRNA release. In terms of biological role, protein L1 is also a translational repressor protein, it controls the translation of the L11 operon by binding to its mRNA. This Synechococcus sp. (strain CC9311) protein is Large ribosomal subunit protein uL1.